Consider the following 79-residue polypeptide: Putative defensin-like protein 80 (79 aa).

The first 26 residues, M1–P26, serve as a signal peptide directing secretion. 4 disulfide bridges follow: C32/C65, C36/C58, C44/C63, and C48/C64.

This sequence belongs to the DEFL family.

The protein resides in the secreted. In Arabidopsis thaliana (Mouse-ear cress), this protein is Putative defensin-like protein 80 (LCR81).